Reading from the N-terminus, the 95-residue chain is Co-chaperonin GroES (95 aa).

Belongs to the GroES chaperonin family. As to quaternary structure, heptamer of 7 subunits arranged in a ring. Interacts with the chaperonin GroEL.

It is found in the cytoplasm. Its function is as follows. Together with the chaperonin GroEL, plays an essential role in assisting protein folding. The GroEL-GroES system forms a nano-cage that allows encapsulation of the non-native substrate proteins and provides a physical environment optimized to promote and accelerate protein folding. GroES binds to the apical surface of the GroEL ring, thereby capping the opening of the GroEL channel. The polypeptide is Co-chaperonin GroES (Alkalilimnicola ehrlichii (strain ATCC BAA-1101 / DSM 17681 / MLHE-1)).